We begin with the raw amino-acid sequence, 328 residues long: Phosphate acetyltransferase (328 aa).

The protein belongs to the phosphate acetyltransferase and butyryltransferase family.

It is found in the cytoplasm. It carries out the reaction acetyl-CoA + phosphate = acetyl phosphate + CoA. Its pathway is metabolic intermediate biosynthesis; acetyl-CoA biosynthesis; acetyl-CoA from acetate: step 2/2. The sequence is that of Phosphate acetyltransferase (pta) from Staphylococcus aureus (strain COL).